A 77-amino-acid chain; its full sequence is UPF0291 protein EAT1b_0405 (77 aa).

The tract at residues 53 to 77 (KVVDPDGNDVTPEKLKEDQKRYRGE) is disordered. Residues 63–77 (TPEKLKEDQKRYRGE) show a composition bias toward basic and acidic residues.

The protein belongs to the UPF0291 family.

It localises to the cytoplasm. The chain is UPF0291 protein EAT1b_0405 from Exiguobacterium sp. (strain ATCC BAA-1283 / AT1b).